Here is a 261-residue protein sequence, read N- to C-terminus: Kallikrein-2 (261 aa).

The N-terminal stretch at 1–18 is a signal peptide; sequence MWDLVLSIALSVGCTGAV. Positions 19 to 24 are cleaved as a propeptide — activation peptide; that stretch reads PLIQSR. The Peptidase S1 domain occupies 25 to 258; sequence IVGGWECEKH…YRKWIKDTIA (234 aa). 5 disulfide bridges follow: cysteine 31/cysteine 173, cysteine 50/cysteine 66, cysteine 152/cysteine 219, cysteine 184/cysteine 198, and cysteine 209/cysteine 234. The Charge relay system role is filled by histidine 65. N-linked (GlcNAc...) asparagine glycosylation is present at asparagine 102. The Charge relay system role is filled by aspartate 120. The active-site Charge relay system is the serine 213.

This sequence belongs to the peptidase S1 family. Kallikrein subfamily.

The catalysed reaction is Preferential cleavage of Arg-|-Xaa bonds in small molecule substrates. Highly selective action to release kallidin (lysyl-bradykinin) from kininogen involves hydrolysis of Met-|-Xaa or Leu-|-Xaa.. Glandular kallikreins cleave Met-Lys and Arg-Ser bonds in kininogen to release Lys-bradykinin. The sequence is that of Kallikrein-2 (KLK2) from Homo sapiens (Human).